A 762-amino-acid polypeptide reads, in one-letter code: 5-methyltetrahydropteroyltriglutamate--homocysteine methyltransferase (762 aa).

5-methyltetrahydropteroyltri-L-glutamate is bound by residues 18–21 (REWK) and K112. Residues 435–437 (IGS) and E488 contribute to the L-homocysteine site. L-methionine contacts are provided by residues 435–437 (IGS) and E488. 5-methyltetrahydropteroyltri-L-glutamate-binding positions include 519–520 (RC) and W565. D603 contributes to the L-homocysteine binding site. Residue D603 participates in L-methionine binding. E609 lines the 5-methyltetrahydropteroyltri-L-glutamate pocket. Positions 645, 647, and 669 each coordinate Zn(2+). Catalysis depends on H698, which acts as the Proton donor. Residue C730 participates in Zn(2+) binding.

This sequence belongs to the vitamin-B12 independent methionine synthase family. Requires Zn(2+) as cofactor.

It carries out the reaction 5-methyltetrahydropteroyltri-L-glutamate + L-homocysteine = tetrahydropteroyltri-L-glutamate + L-methionine. It participates in amino-acid biosynthesis; L-methionine biosynthesis via de novo pathway; L-methionine from L-homocysteine (MetE route): step 1/1. In terms of biological role, catalyzes the transfer of a methyl group from 5-methyltetrahydrofolate to homocysteine resulting in methionine formation. This is 5-methyltetrahydropteroyltriglutamate--homocysteine methyltransferase from Bacillus licheniformis (strain ATCC 14580 / DSM 13 / JCM 2505 / CCUG 7422 / NBRC 12200 / NCIMB 9375 / NCTC 10341 / NRRL NRS-1264 / Gibson 46).